Here is a 311-residue protein sequence, read N- to C-terminus: Tyrosine recombinase XerD (311 aa).

A Core-binding (CB) domain is found at 1–83 (MEFIAQFLEM…TIKSYYAFLI (83 aa)). Positions 104–299 (KLPIILSIDQ…HTNHLKKALL (196 aa)) constitute a Tyr recombinase domain. Residues R145, K176, H251, R254, and H277 contribute to the active site. The active-site O-(3'-phospho-DNA)-tyrosine intermediate is the Y286.

The protein belongs to the 'phage' integrase family. XerD subfamily. Forms a cyclic heterotetrameric complex composed of two molecules of XerC and two molecules of XerD.

Its subcellular location is the cytoplasm. Site-specific tyrosine recombinase, which acts by catalyzing the cutting and rejoining of the recombining DNA molecules. The XerC-XerD complex is essential to convert dimers of the bacterial chromosome into monomers to permit their segregation at cell division. It also contributes to the segregational stability of plasmids. This chain is Tyrosine recombinase XerD, found in Rickettsia prowazekii (strain Madrid E).